The sequence spans 233 residues: Protein YIPF6 (233 aa).

Over 1–84 (MAETEGFGDS…PKKSTTLLRD (84 aa)) the chain is Cytoplasmic. A helical membrane pass occupies residues 85-105 (WDLWGPLVLCVSLALMLQGGN). Residues 106–111 (ADSKDD) lie on the Lumenal side of the membrane. Residues 112–132 (GGPQFAEVFVIIWFGAVVITL) form a helical membrane-spanning segment. The Cytoplasmic portion of the chain corresponds to 133–142 (NSKLLGGTIS). Residues 143 to 163 (FFQSLCVLGYCILPLTVAMLV) form a helical membrane-spanning segment. The Lumenal segment spans residues 164 to 180 (CRLVLLLSHTTASFIVR). Residues 181-201 (LVVVTVMFAWSTFASTAFLAD) traverse the membrane as a helical segment. Residues 202 to 208 (SQPPNRR) lie on the Cytoplasmic side of the membrane. The helical transmembrane segment at 209-229 (ALAVYPIFLFYFVISWMVLTF) threads the bilayer. Over 230 to 233 (NTVS) the chain is Lumenal.

The protein belongs to the YIP1 family.

It is found in the golgi apparatus membrane. This Xenopus tropicalis (Western clawed frog) protein is Protein YIPF6 (yipf6).